The following is a 146-amino-acid chain: Large ribosomal subunit protein bL17 (146 aa).

Positions 118–146 (RDPAAKGQDSGPKPEVASDEDEAGEAAAA) are disordered. A compositionally biased stretch (acidic residues) spans 134-146 (ASDEDEAGEAAAA).

This sequence belongs to the bacterial ribosomal protein bL17 family. As to quaternary structure, part of the 50S ribosomal subunit. Contacts protein L32.

This is Large ribosomal subunit protein bL17 from Acidiphilium cryptum (strain JF-5).